A 72-amino-acid polypeptide reads, in one-letter code: Translation initiation factor IF-1 (72 aa).

Residues 1 to 72 form the S1-like domain; that stretch reads MTKEDNIEMQ…TKGRIIFRSR (72 aa).

It belongs to the IF-1 family. As to quaternary structure, component of the 30S ribosomal translation pre-initiation complex which assembles on the 30S ribosome in the order IF-2 and IF-3, IF-1 and N-formylmethionyl-tRNA(fMet); mRNA recruitment can occur at any time during PIC assembly.

Its subcellular location is the cytoplasm. Its function is as follows. One of the essential components for the initiation of protein synthesis. Stabilizes the binding of IF-2 and IF-3 on the 30S subunit to which N-formylmethionyl-tRNA(fMet) subsequently binds. Helps modulate mRNA selection, yielding the 30S pre-initiation complex (PIC). Upon addition of the 50S ribosomal subunit IF-1, IF-2 and IF-3 are released leaving the mature 70S translation initiation complex. The polypeptide is Translation initiation factor IF-1 (Buchnera aphidicola subsp. Schizaphis graminum (strain Sg)).